We begin with the raw amino-acid sequence, 180 residues long: Pyruvoyl-dependent arginine decarboxylase (180 aa).

S41 is modified (pyruvic acid (Ser)).

The protein belongs to the PdaD family. Requires pyruvate as cofactor.

It carries out the reaction L-arginine + H(+) = agmatine + CO2. The polypeptide is Pyruvoyl-dependent arginine decarboxylase (Methanococcoides burtonii (strain DSM 6242 / NBRC 107633 / OCM 468 / ACE-M)).